Consider the following 165-residue polypeptide: NADPH-dependent 7-cyano-7-deazaguanine reductase (165 aa).

The Thioimide intermediate role is filled by Cys56. The active-site Proton donor is the Asp63. Substrate-binding positions include 78–80 (VES) and 97–98 (HE).

Belongs to the GTP cyclohydrolase I family. QueF type 1 subfamily.

The protein localises to the cytoplasm. The enzyme catalyses 7-aminomethyl-7-carbaguanine + 2 NADP(+) = 7-cyano-7-deazaguanine + 2 NADPH + 3 H(+). It functions in the pathway tRNA modification; tRNA-queuosine biosynthesis. Functionally, catalyzes the NADPH-dependent reduction of 7-cyano-7-deazaguanine (preQ0) to 7-aminomethyl-7-deazaguanine (preQ1). The sequence is that of NADPH-dependent 7-cyano-7-deazaguanine reductase from Bacillus mycoides (strain KBAB4) (Bacillus weihenstephanensis).